Consider the following 146-residue polypeptide: Putative nickel-responsive regulator 1 (146 aa).

Residues His81, His92, Tyr94, and Cys100 each contribute to the Ni(2+) site.

It belongs to the transcriptional regulatory CopG/NikR family. The cofactor is Ni(2+).

Its function is as follows. Transcriptional regulator. The chain is Putative nickel-responsive regulator 1 from Methanosarcina mazei (strain ATCC BAA-159 / DSM 3647 / Goe1 / Go1 / JCM 11833 / OCM 88) (Methanosarcina frisia).